The sequence spans 558 residues: C4b-binding protein alpha chain (558 aa).

A signal peptide spans 1-13; sequence MSLTAALWVAVFG. Sushi domains lie at 14 to 74, 75 to 136, 137 to 201, 202 to 260, 261 to 326, 327 to 388, 389 to 445, and 446 to 503; these read KCGP…ACVK, KSCR…ECVI, AKCG…TCER, IICP…VCEL, NSCT…GCKE, ICCP…SCHQ, SCDF…QCKA, and LCRK…RCEQ. Disulfide bonds link Cys-15/Cys-60, Cys-45/Cys-72, Cys-77/Cys-118, Cys-104/Cys-134, Cys-139/Cys-182, Cys-168/Cys-199, Cys-204/Cys-246, Cys-232/Cys-258, Cys-263/Cys-312, Cys-296/Cys-324, Cys-329/Cys-373, Cys-363/Cys-386, Cys-390/Cys-431, Cys-417/Cys-443, Cys-447/Cys-488, and Cys-474/Cys-501. Residue Asn-31 is glycosylated (N-linked (GlcNAc...) asparagine). N-linked (GlcNAc...) asparagine glycans are attached at residues Asn-177 and Asn-186. Residues Asn-469 and Asn-491 are each glycosylated (N-linked (GlcNAc...) asparagine).

As to quaternary structure, disulfide-linked complex of alpha and beta chains.

It is found in the secreted. In terms of biological role, controls the classical pathway of complement activation. It binds as a cofactor to C3b/C4b inactivator (C3bINA), which then hydrolyzes the complement fragment C4b. It also accelerates the degradation of the C4bC2a complex (C3 convertase) by dissociating the complement fragment C2a. Alpha chain binds C4b. It also interacts with anticoagulant protein S and with serum amyloid P component. The chain is C4b-binding protein alpha chain (C4bpa) from Rattus norvegicus (Rat).